A 539-amino-acid chain; its full sequence is Oviduct-specific glycoprotein (539 aa).

The first 21 residues, 1–21 (MGKLLLWVGLLLMLKHHDGAA), serve as a signal peptide directing secretion. A GH18 domain is found at 22–385 (HKLVCYFTNW…HTLNNLLVND (364 aa)). Cysteine 26 and cysteine 51 form a disulfide bridge. Residues 71 to 72 (PL), 98 to 101 (GGWN), tyrosine 142, 211 to 214 (LSYD), and tryptophan 355 contribute to the chitin site. Asparagine 402 carries N-linked (GlcNAc...) asparagine glycosylation. Disordered regions lie at residues 433–480 (TETH…KPLT) and 503–539 (QKVT…LERL). Positions 440-457 (ATMTTTPRGETATPTRTP) are enriched in low complexity.

This sequence belongs to the glycosyl hydrolase 18 family. As to expression, oviduct.

Its subcellular location is the cytoplasmic vesicle. The protein resides in the secretory vesicle. Functionally, binds to oocyte zona pellucida in vivo. May play a role in the fertilization process and/or early embryonic development. This chain is Oviduct-specific glycoprotein (OVGP1), found in Ovis aries (Sheep).